A 256-amino-acid chain; its full sequence is MTERRQPSLSTDTLPTREAAAIELLSQVCRELDSIVFATSLGAEDMVLTEIIRRERLPIRIFTLDTGRLPTETLELIEVVERHYGTRIERYAPHPDAIADYVSRYGLDGFYDSVPARQACCRVRKLEPLKRALAGQSAWVTGLRAEQSVTRAELPAREWDAANGLEKINPLADWSEHEVWAFIRHHRVPYNPLHNQGYPSIGCAPCTRAITVGEDVRAGRWWWENPETKECGLHRREFAPRQPSAHPAIERDRSAA.

[4Fe-4S] cluster is bound by residues C120, C121, C203, and C206. The active-site Nucleophile; cysteine thiosulfonate intermediate is the C231.

The protein belongs to the PAPS reductase family. CysH subfamily. The cofactor is [4Fe-4S] cluster.

It is found in the cytoplasm. The enzyme catalyses [thioredoxin]-disulfide + sulfite + AMP + 2 H(+) = adenosine 5'-phosphosulfate + [thioredoxin]-dithiol. It participates in sulfur metabolism; hydrogen sulfide biosynthesis; sulfite from sulfate. In terms of biological role, catalyzes the formation of sulfite from adenosine 5'-phosphosulfate (APS) using thioredoxin as an electron donor. In Allochromatium vinosum (strain ATCC 17899 / DSM 180 / NBRC 103801 / NCIMB 10441 / D) (Chromatium vinosum), this protein is Adenosine 5'-phosphosulfate reductase.